The sequence spans 464 residues: NADH-ubiquinone oxidoreductase chain 4 (464 aa).

13 helical membrane passes run 1–21 (MMITLILFTTGIVMTTLVIPQ), 63–83 (SISAPLIALSCWLAPISLIAS), 98–118 (FIIIVIFIAGALIITFSALEL), 119–139 (LLFYVAFETTLIPTLILITRW), 152–172 (FMFYTLFGSLPLLISLIAIYI), 197–217 (IWWALSIIAFLIKMPIYGFHL), 227–247 (PVAGSMILAAILLKLGGYGLI), 261–281 (LSLALITFCSWGALVTSIICV), 288–308 (ALIAYSSVGHMSIVAAAIFSS), 314–334 (NGALILMIAYGLVSSDLFSLA), 355–375 (ILPLSTLWWLVMSAANLGLPP), 389–409 (LIAWSIWLFPIIGLATIFGAI), and 443–463 (LHTLPLILIIINPISALITWL).

This sequence belongs to the complex I subunit 4 family.

It is found in the mitochondrion membrane. It carries out the reaction a ubiquinone + NADH + 5 H(+)(in) = a ubiquinol + NAD(+) + 4 H(+)(out). In terms of biological role, core subunit of the mitochondrial membrane respiratory chain NADH dehydrogenase (Complex I) that is believed to belong to the minimal assembly required for catalysis. Complex I functions in the transfer of electrons from NADH to the respiratory chain. The immediate electron acceptor for the enzyme is believed to be ubiquinone. This Paracentrotus lividus (Common sea urchin) protein is NADH-ubiquinone oxidoreductase chain 4 (ND4).